A 91-amino-acid chain; its full sequence is Putative 26S proteasome complex subunit sem-1 (91 aa).

Residues 1–73 (MASTQPKNDA…SWDDDDTSDD (73 aa)) are disordered. A compositionally biased stretch (basic and acidic residues) spans 8–28 (NDAKSTEPKPEQPVTEKKTAV). Acidic residues-rich tracts occupy residues 29–48 (LEED…AEDT) and 63–72 (ESWDDDDTSD).

It belongs to the DSS1/SEM1 family. Part of the 26S proteasome.

Subunit of the 26S proteasome which plays a role in ubiquitin-dependent proteolysis. The polypeptide is Putative 26S proteasome complex subunit sem-1 (sem-1) (Neurospora crassa (strain ATCC 24698 / 74-OR23-1A / CBS 708.71 / DSM 1257 / FGSC 987)).